The chain runs to 334 residues: Ornithine carbamoyltransferase (334 aa).

Residues 57–60 (STRT), glutamine 84, arginine 108, and 135–138 (HPTQ) each bind carbamoyl phosphate. Residues asparagine 169, aspartate 233, and 237–238 (SM) contribute to the L-ornithine site. Carbamoyl phosphate is bound by residues 275–276 (CL) and arginine 320.

It belongs to the aspartate/ornithine carbamoyltransferase superfamily. OTCase family.

It localises to the cytoplasm. It catalyses the reaction carbamoyl phosphate + L-ornithine = L-citrulline + phosphate + H(+). The protein operates within amino-acid biosynthesis; L-arginine biosynthesis; L-arginine from L-ornithine and carbamoyl phosphate: step 1/3. Reversibly catalyzes the transfer of the carbamoyl group from carbamoyl phosphate (CP) to the N(epsilon) atom of ornithine (ORN) to produce L-citrulline. The polypeptide is Ornithine carbamoyltransferase (Vibrio vulnificus (strain YJ016)).